We begin with the raw amino-acid sequence, 224 residues long: MSALGAAAPYLHHPADSHSGRVSFLGSQPSPEVTAVAQLLKDLDRSTFRKLLKLVVGALHGKDCREAVEQLGASANLSEERLAVLLAGTHTLLQQALRLPPASLKPDAFQEELQELGIPQDLIGDLASLAFGSQRPLLDSVAQQQGSSLPHVSYFRWRVDVAISTSAQSRSLQPSVLMQLKLTDGSAHRFEVPIAKFQELRYSVALVLKEMAELEKKCERKLQD.

N-acetylserine is present on S2. The COMM domain occupies 151–215; that stretch reads HVSYFRWRVD…LVLKEMAELE (65 aa).

This sequence belongs to the COMM domain-containing protein 5 family. As to quaternary structure, component of the commander complex consisting of the CCC subcomplex and the retriever subcomplex. Component of the CCC (COMMD/CCDC22/CCDC93) subcomplex consisting of COMMD1, COMMD2, COMMD3, COMMD4, COMMD5, COMMD6, COMMD7, COMMD8, COMMD9, COMMD10, CCDC22 and CCDC93; within the complex forms a heterodimer with COMMD10. Interacts (via COMM domain) with COMMD1 (via COMM domain). Interacts with RELA, RELB, NFKB1/p105. Interacts with CCDC22, CCDC93, SCNN1B, CUL2, CUL3, CUL4A, CUL4B, CUL7. As to expression, expressed in the zona fasciculata and medulla of the adrenal gland; expressed in kidney proximal tubules. Basal expression is higher in hypertensive than in normotensive animals.

Its subcellular location is the nucleus. Scaffold protein in the commander complex that is essential for endosomal recycling of transmembrane cargos; the commander complex is composed of the CCC subcomplex and the retriever subcomplex. May modulate activity of cullin-RING E3 ubiquitin ligase (CRL) complexes. Negatively regulates cell proliferation. Negatively regulates cell cycle G2/M phase transition probably by transactivating p21/CDKN1A through the p53/TP53-independent signaling pathway. Involved in kidney proximal tubule morphogenesis. Down-regulates activation of NF-kappa-B. This is COMM domain-containing protein 5 (Commd5) from Rattus norvegicus (Rat).